Reading from the N-terminus, the 914-residue chain is Translation initiation factor IF-2 (914 aa).

2 disordered regions span residues 246-271 and 293-313; these read EDGE…KKKG and SGMD…QRRM. The span at 249-266 shows a compositional bias: basic and acidic residues; it reads EAAKKKAAKPDGGEDVGV. The tr-type G domain occupies 411–581; the sequence is TRPPVVTIMG…LAEAEIRELK (171 aa). The tract at residues 420–427 is G1; the sequence is GHVDHGKT. 420–427 contacts GTP; it reads GHVDHGKT. Positions 445 to 449 are G2; the sequence is GITQH. The G3 stretch occupies residues 467–470; that stretch reads DTPG. GTP is bound by residues 467-471 and 521-524; these read DTPGH and NKID. The interval 521 to 524 is G4; the sequence is NKID. Residues 557-559 are G5; the sequence is SAK.

Belongs to the TRAFAC class translation factor GTPase superfamily. Classic translation factor GTPase family. IF-2 subfamily.

It is found in the cytoplasm. Its function is as follows. One of the essential components for the initiation of protein synthesis. Protects formylmethionyl-tRNA from spontaneous hydrolysis and promotes its binding to the 30S ribosomal subunits. Also involved in the hydrolysis of GTP during the formation of the 70S ribosomal complex. The protein is Translation initiation factor IF-2 of Chlorobaculum tepidum (strain ATCC 49652 / DSM 12025 / NBRC 103806 / TLS) (Chlorobium tepidum).